The primary structure comprises 454 residues: Protein phosphatase 1F (454 aa).

The segment covering 1-12 has biased composition (polar residues); it reads MSSGAPQKSSPM. Positions 1–28 are disordered; the sequence is MSSGAPQKSSPMASGAEETPGFLDTLLQ. The PPM-type phosphatase domain occupies 156–413; it reads LVSIHAIRNT…DNITVMVVFL (258 aa). Mn(2+) contacts are provided by aspartate 198, glycine 199, aspartate 360, and aspartate 404. The tract at residues 419–454 is disordered; the sequence is LLEGGNQGEGDPQAEGRRQDLPSSLPEPETQAPPRS. Serine 454 carries the post-translational modification Phosphoserine.

Belongs to the PP2C family. Associates with FEM1B. It depends on Mg(2+) as a cofactor. Requires Mn(2+) as cofactor.

It carries out the reaction O-phospho-L-seryl-[protein] + H2O = L-seryl-[protein] + phosphate. The enzyme catalyses O-phospho-L-threonyl-[protein] + H2O = L-threonyl-[protein] + phosphate. Dephosphorylates and concomitantly deactivates CaM-kinase II activated upon autophosphorylation, and CaM-kinases IV and I activated upon phosphorylation by CaM-kinase kinase. Promotes apoptosis. This is Protein phosphatase 1F (PPM1F) from Homo sapiens (Human).